Consider the following 213-residue polypeptide: Pyrrolidone-carboxylate peptidase (213 aa).

Catalysis depends on residues Glu-78, Cys-141, and His-165.

Belongs to the peptidase C15 family. Homotetramer.

The protein localises to the cytoplasm. The catalysed reaction is Release of an N-terminal pyroglutamyl group from a polypeptide, the second amino acid generally not being Pro.. Its function is as follows. Removes 5-oxoproline from various penultimate amino acid residues except L-proline. The sequence is that of Pyrrolidone-carboxylate peptidase from Clostridium perfringens (strain ATCC 13124 / DSM 756 / JCM 1290 / NCIMB 6125 / NCTC 8237 / Type A).